The primary structure comprises 204 residues: High frequency lysogenization protein HflD homolog (204 aa).

The protein belongs to the HflD family.

Its subcellular location is the cytoplasm. It is found in the cell inner membrane. The chain is High frequency lysogenization protein HflD homolog from Xanthomonas campestris pv. campestris (strain ATCC 33913 / DSM 3586 / NCPPB 528 / LMG 568 / P 25).